We begin with the raw amino-acid sequence, 300 residues long: Succinate--CoA ligase [ADP-forming] subunit alpha (300 aa).

CoA is bound by residues 17 to 20 (TGST), K43, and 96 to 98 (ITE). Y159 is a binding site for substrate. H247 acts as the Tele-phosphohistidine intermediate in catalysis.

Belongs to the succinate/malate CoA ligase alpha subunit family. In terms of assembly, heterotetramer of two alpha and two beta subunits.

It carries out the reaction succinate + ATP + CoA = succinyl-CoA + ADP + phosphate. It catalyses the reaction GTP + succinate + CoA = succinyl-CoA + GDP + phosphate. Its pathway is carbohydrate metabolism; tricarboxylic acid cycle; succinate from succinyl-CoA (ligase route): step 1/1. Succinyl-CoA synthetase functions in the citric acid cycle (TCA), coupling the hydrolysis of succinyl-CoA to the synthesis of either ATP or GTP and thus represents the only step of substrate-level phosphorylation in the TCA. The alpha subunit of the enzyme binds the substrates coenzyme A and phosphate, while succinate binding and nucleotide specificity is provided by the beta subunit. The protein is Succinate--CoA ligase [ADP-forming] subunit alpha of Bacillus subtilis (strain 168).